The following is a 119-amino-acid chain: Immunoglobulin lambda variable 2-11 (119 aa).

An N-terminal signal peptide occupies residues 1 to 19 (MAWALLLLSLLTQGTGSWA). Pyrrolidone carboxylic acid is present on Q20. The segment at 20–44 (QSALTQPRSVSGSPGQSVTISCTGT) is framework-1. The Ig-like domain maps to 20–119 (QSALTQPRSV…CSYAGSYTFH (100 aa)). Residues C41 and C109 are joined by a disulfide bond. A complementarity-determining-1 region spans residues 45 to 53 (SSDVGGYNY). A framework-2 region spans residues 54-70 (VSWYQQHPGKAPKLMIY). The complementarity-determining-2 stretch occupies residues 71-73 (DVS). The segment at 74 to 109 (KRPSGVPDRFSGSKSGNTASLTISGLQAEDEADYYC) is framework-3. The complementarity-determining-3 stretch occupies residues 110-119 (CSYAGSYTFH).

Immunoglobulins are composed of two identical heavy chains and two identical light chains; disulfide-linked.

The protein localises to the secreted. The protein resides in the cell membrane. Functionally, v region of the variable domain of immunoglobulin light chains that participates in the antigen recognition. Immunoglobulins, also known as antibodies, are membrane-bound or secreted glycoproteins produced by B lymphocytes. In the recognition phase of humoral immunity, the membrane-bound immunoglobulins serve as receptors which, upon binding of a specific antigen, trigger the clonal expansion and differentiation of B lymphocytes into immunoglobulins-secreting plasma cells. Secreted immunoglobulins mediate the effector phase of humoral immunity, which results in the elimination of bound antigens. The antigen binding site is formed by the variable domain of one heavy chain, together with that of its associated light chain. Thus, each immunoglobulin has two antigen binding sites with remarkable affinity for a particular antigen. The variable domains are assembled by a process called V-(D)-J rearrangement and can then be subjected to somatic hypermutations which, after exposure to antigen and selection, allow affinity maturation for a particular antigen. This is Immunoglobulin lambda variable 2-11 from Homo sapiens (Human).